A 418-amino-acid chain; its full sequence is Light-independent protochlorophyllide reductase subunit N (418 aa).

3 residues coordinate [4Fe-4S] cluster: Cys-17, Cys-42, and Cys-103.

Belongs to the BchN/ChlN family. Protochlorophyllide reductase is composed of three subunits; ChlL, ChlN and ChlB. Forms a heterotetramer of two ChlB and two ChlN subunits. Requires [4Fe-4S] cluster as cofactor.

It catalyses the reaction chlorophyllide a + oxidized 2[4Fe-4S]-[ferredoxin] + 2 ADP + 2 phosphate = protochlorophyllide a + reduced 2[4Fe-4S]-[ferredoxin] + 2 ATP + 2 H2O. It participates in porphyrin-containing compound metabolism; chlorophyll biosynthesis (light-independent). Component of the dark-operative protochlorophyllide reductase (DPOR) that uses Mg-ATP and reduced ferredoxin to reduce ring D of protochlorophyllide (Pchlide) to form chlorophyllide a (Chlide). This reaction is light-independent. The NB-protein (ChlN-ChlB) is the catalytic component of the complex. This chain is Light-independent protochlorophyllide reductase subunit N, found in Prochlorococcus marinus (strain NATL2A).